A 292-amino-acid chain; its full sequence is Elongation factor Ts (292 aa).

Positions T79–V82 are involved in Mg(2+) ion dislocation from EF-Tu.

This sequence belongs to the EF-Ts family.

The protein resides in the cytoplasm. Functionally, associates with the EF-Tu.GDP complex and induces the exchange of GDP to GTP. It remains bound to the aminoacyl-tRNA.EF-Tu.GTP complex up to the GTP hydrolysis stage on the ribosome. In Xylella fastidiosa (strain 9a5c), this protein is Elongation factor Ts.